Here is a 164-residue protein sequence, read N- to C-terminus: CASP-like protein 1C2 (164 aa).

Over 1-8 the chain is Cytoplasmic; that stretch reads MAVELKKV. Residues 9-29 form a helical membrane-spanning segment; the sequence is FSTILRFLALAATVVAVIVMI. The Extracellular portion of the chain corresponds to 30-53; that stretch reads RSHDSAIVLNLTFSAKYNNTPAFK. Asn-39 carries an N-linked (GlcNAc...) asparagine glycan. The chain crosses the membrane as a helical span at residues 54–74; the sequence is YFVIAEGIASVYTIIVIFLWS. Residues 75–80 lie on the Cytoplasmic side of the membrane; it reads KGLLGR. Residues 81 to 101 traverse the membrane as a helical segment; the sequence is LIVILDMVTTVLLTSSISAAL. Topologically, residues 102–129 are extracellular; sequence AIAQVGKKGNSHAGWLPVCGQVPKFCDQ. Residues 130–150 traverse the membrane as a helical segment; that stretch reads AIIALVAGFVAAIVYFMLLLC. Over 151–164 the chain is Cytoplasmic; it reads SLHAVLTPIFAVKP.

Belongs to the Casparian strip membrane proteins (CASP) family. Homodimer and heterodimers.

The protein localises to the cell membrane. This Ricinus communis (Castor bean) protein is CASP-like protein 1C2.